A 286-amino-acid polypeptide reads, in one-letter code: Flagellar filament 33 kDa core protein (286 aa).

It belongs to the bacterial flagellin family. As to quaternary structure, the flagellum consists of an outer layer composed of repeating units of FlaA around a core that contains several antigenically related polypeptides.

It localises to the periplasmic flagellum. Its subcellular location is the periplasm. Component of the core of the flagella. The protein is Flagellar filament 33 kDa core protein of Treponema phagedenis.